The sequence spans 513 residues: E3 ubiquitin-protein ligase RNF25 (513 aa).

An RWD domain is found at 9–117 (SEIEVLQSIY…ERAKEILTDS (109 aa)). The Zn(2+) site is built by cysteine 124, cysteine 127, cysteine 142, histidine 144, histidine 147, cysteine 150, cysteine 187, and cysteine 190. The segment at 124–191 (CVICLYDFKE…ELAVVCPVCR (68 aa)) adopts an RING-type; atypical zinc-finger fold. The segment at 261-513 (NLSDTPGMTD…EKEFRKEGVL (253 aa)) is disordered. A compositionally biased stretch (low complexity) spans 271–297 (SSGAESSQSLPSSSPDSTSTTQTSQNQ). 2 stretches are compositionally biased toward polar residues: residues 345-397 (SDKI…QDML) and 406-423 (EVSQ…QTIL). Residues 426–440 (GHPEREHVGRGDKRG) show a composition bias toward basic and acidic residues. Residues 482–498 (AGRGHRGGGAYRGGGRG) show a composition bias toward gly residues. Residues 501-513 (QRVEKEFRKEGVL) show a composition bias toward basic and acidic residues.

It belongs to the RNF25 family.

It is found in the cytoplasm. It catalyses the reaction S-ubiquitinyl-[E2 ubiquitin-conjugating enzyme]-L-cysteine + [acceptor protein]-L-lysine = [E2 ubiquitin-conjugating enzyme]-L-cysteine + N(6)-ubiquitinyl-[acceptor protein]-L-lysine.. The protein operates within protein modification; protein ubiquitination. In terms of biological role, E3 ubiquitin-protein ligase that plays a key role in the RNF14-RNF25 translation quality control pathway, a pathway that takes place when a ribosome has stalled during translation, and which promotes ubiquitination and degradation of translation factors on stalled ribosomes. May also acts as a positive regulator of the Wnt signaling. This is E3 ubiquitin-protein ligase RNF25 from Danio rerio (Zebrafish).